The sequence spans 238 residues: Transcriptional repressor ThaA (238 aa).

Residues 169–234 form the HTH luxR-type domain; the sequence is IPGEIARVSL…HAAVKATLVG (66 aa). The segment at residues 193-212 is a DNA-binding region (H-T-H motif); sequence VSEISSILQMSVRNINFHIQ.

It belongs to the autoinducer-regulated transcriptional regulatory protein family.

Represses thailandamide production. The protein is Transcriptional repressor ThaA of Burkholderia thailandensis (strain ATCC 700388 / DSM 13276 / CCUG 48851 / CIP 106301 / E264).